The chain runs to 62 residues: Large ribosomal subunit protein uL29 (62 aa).

It belongs to the universal ribosomal protein uL29 family.

The sequence is that of Large ribosomal subunit protein uL29 from Syntrophotalea carbinolica (strain DSM 2380 / NBRC 103641 / GraBd1) (Pelobacter carbinolicus).